The chain runs to 1007 residues: Bifunctional glutamine synthetase adenylyltransferase/adenylyl-removing enzyme (1007 aa).

Residues 1-496 form an adenylyl removase region; that stretch reads MTREQLSLTV…LHERLFYRPL (496 aa). The tract at residues 505–1007 is adenylyl transferase; the sequence is NEDARLSGEA…GPPQRPATTA (503 aa).

It belongs to the GlnE family. Mg(2+) serves as cofactor.

The enzyme catalyses [glutamine synthetase]-O(4)-(5'-adenylyl)-L-tyrosine + phosphate = [glutamine synthetase]-L-tyrosine + ADP. It carries out the reaction [glutamine synthetase]-L-tyrosine + ATP = [glutamine synthetase]-O(4)-(5'-adenylyl)-L-tyrosine + diphosphate. Involved in the regulation of glutamine synthetase GlnA, a key enzyme in the process to assimilate ammonia. When cellular nitrogen levels are high, the C-terminal adenylyl transferase (AT) inactivates GlnA by covalent transfer of an adenylyl group from ATP to specific tyrosine residue of GlnA, thus reducing its activity. Conversely, when nitrogen levels are low, the N-terminal adenylyl removase (AR) activates GlnA by removing the adenylyl group by phosphorolysis, increasing its activity. The regulatory region of GlnE binds the signal transduction protein PII (GlnB) which indicates the nitrogen status of the cell. The sequence is that of Bifunctional glutamine synthetase adenylyltransferase/adenylyl-removing enzyme from Leifsonia xyli subsp. xyli (strain CTCB07).